The following is a 1362-amino-acid chain: DNA-directed RNA polymerase subunit beta (1362 aa).

The protein belongs to the RNA polymerase beta chain family. In terms of assembly, the RNAP catalytic core consists of 2 alpha, 1 beta, 1 beta' and 1 omega subunit. When a sigma factor is associated with the core the holoenzyme is formed, which can initiate transcription.

The enzyme catalyses RNA(n) + a ribonucleoside 5'-triphosphate = RNA(n+1) + diphosphate. Functionally, DNA-dependent RNA polymerase catalyzes the transcription of DNA into RNA using the four ribonucleoside triphosphates as substrates. The protein is DNA-directed RNA polymerase subunit beta of Acidithiobacillus ferrooxidans (strain ATCC 23270 / DSM 14882 / CIP 104768 / NCIMB 8455) (Ferrobacillus ferrooxidans (strain ATCC 23270)).